The chain runs to 85 residues: U4-theraphotoxin-Hhn1a (85 aa).

A signal peptide spans 1–22 (MKVTLIVILTCAAVLVLHTTAA). Residues 23 to 48 (EELEAESQLMEVGMPDTELAAVDEER) constitute a propeptide that is removed on maturation. Cystine bridges form between cysteine 52/cysteine 66, cysteine 56/cysteine 77, and cysteine 71/cysteine 82.

Belongs to the neurotoxin 12 (Hwtx-2) family. 02 (Hwtx-2) subfamily. Monomer. In terms of tissue distribution, expressed by the venom gland.

The protein resides in the secreted. In terms of biological role, neurotoxin active on both insects and mammals. This is U4-theraphotoxin-Hhn1a from Cyriopagopus hainanus (Chinese bird spider).